The sequence spans 230 residues: Thiamine-triphosphatase (230 aa).

Position 2 is an N-acetylalanine (alanine 2). The 197-residue stretch at 5–201 (LIEVERKFLP…AKLIVYLQRF (197 aa)) folds into the CYTH domain. The Mg(2+) site is built by glutamate 7 and glutamate 9. 5 residues coordinate substrate: lysine 11, arginine 55, arginine 57, lysine 65, and arginine 125. Mg(2+) is bound by residues aspartate 145, glutamate 157, and glutamate 159. Glutamate 157 is a substrate binding site. Lysine 193 provides a ligand contact to substrate.

Belongs to the ThTPase family. In terms of assembly, monomer. Requires Mg(2+) as cofactor. As to expression, widely expressed but at a low level.

It localises to the cytoplasm. The enzyme catalyses thiamine triphosphate + H2O = thiamine diphosphate + phosphate + H(+). Its function is as follows. Hydrolase highly specific for thiamine triphosphate (ThTP). The polypeptide is Thiamine-triphosphatase (THTPA) (Homo sapiens (Human)).